A 675-amino-acid polypeptide reads, in one-letter code: Vitamin K-dependent protein S (675 aa).

A signal peptide spans 1–24 (MRVLSARFRVLLACLALVIPVSET). A propeptide spanning residues 25 to 41 (NFLSKERASQVLVRKRR) is cleaved from the precursor. Positions 42–87 (ANTLFEETMKGNLERECIEELCNKEEAREVFENNPETDYFYPKYLG) constitute a Gla domain. Residues E47, E48, E55, E57, E60, E61, E66, E67, E70, E73, and E77 each carry the 4-carboxyglutamate modification. An intrachain disulfide couples C58 to C63. A thrombin-sensitive region spans residues 88-116 (CLGAFRVGSFHAARQSANAYPDLRSCVKA). Positions 117–155 (ISDQCDPIPCNEDGYLACQDGQAAFTCFCKPGWQGDRCQ) constitute an EGF-like 1 domain. Intrachain disulfides connect C121–C134, C126–C143, C145–C154, C161–C175, C171–C184, C186–C199, C205–C217, C212–C226, C228–C241, C247–C256, C252–C265, C267–C282, and C449–C475. D136 carries the post-translational modification (3R)-3-hydroxyaspartate. An EGF-like 2; calcium-binding domain is found at 157 to 200 (DVNECKDPSNVNGGCSQICDNTPGSYHCSCKRGFAMLPNKKDCK). The region spanning 201–242 (DLDECALKPSVCGTAVCKNIPGDFECECPDGYRYDPSSKSCK) is the EGF-like 3; calcium-binding domain. Residues 243–283 (DVDECSENMCAQLCVNFPGGYSCYCDGKKGFKLAQDQKSCE) enclose the EGF-like 4; calcium-binding domain. 2 Laminin G-like domains span residues 299 to 475 (LLYL…NKHC) and 484 to 665 (YYPG…AHSC). N-linked (GlcNAc...) asparagine glycans are attached at residues N499 and N509. C638 and C665 form a disulfide bridge.

In terms of processing, the iron and 2-oxoglutarate dependent 3-hydroxylation of aspartate and asparagine is (R) stereospecific within EGF domains. In terms of tissue distribution, plasma.

It localises to the secreted. Its function is as follows. Anticoagulant plasma protein; it is a cofactor to activated protein C in the degradation of coagulation factors Va and VIIIa. It helps to prevent coagulation and stimulating fibrinolysis. This Mus musculus (Mouse) protein is Vitamin K-dependent protein S (Pros1).